The sequence spans 60 residues: Probable UDP-arabinopyranose mutase 1 (60 aa).

It belongs to the RGP family. Homopentamer or homohexamer. Mn(2+) is required as a cofactor. Mg(2+) serves as cofactor.

It localises to the secreted. It is found in the cell wall. Its subcellular location is the cell junction. The protein resides in the plasmodesma. The protein localises to the golgi apparatus. The catalysed reaction is UDP-beta-L-arabinofuranose = UDP-beta-L-arabinopyranose. Functionally, probable UDP-L-arabinose mutase involved in the biosynthesis of cell wall non-cellulosic polysaccharides. The polypeptide is Probable UDP-arabinopyranose mutase 1 (Phoenix dactylifera (Date palm)).